The sequence spans 202 residues: Na(+)-translocating NADH-quinone reductase subunit E (202 aa).

Helical transmembrane passes span 11 to 31, 35 to 55, 81 to 101, 114 to 134, 144 to 164, and 180 to 200; these read SVFIENMALSFFLGMCTFIAV, IETAVGLGIAVVIVQTLTVPA, FIALMACIGVIAAMVQILEMV, GIFLPLITVNCAILAGSLFMI, VVYGVGSGFGWALAITAMAGV, and LGITFISAGLMALGFMAFSGI.

This sequence belongs to the NqrDE/RnfAE family. Composed of six subunits; NqrA, NqrB, NqrC, NqrD, NqrE and NqrF.

It is found in the cell inner membrane. It catalyses the reaction a ubiquinone + n Na(+)(in) + NADH + H(+) = a ubiquinol + n Na(+)(out) + NAD(+). Functionally, NQR complex catalyzes the reduction of ubiquinone-1 to ubiquinol by two successive reactions, coupled with the transport of Na(+) ions from the cytoplasm to the periplasm. NqrA to NqrE are probably involved in the second step, the conversion of ubisemiquinone to ubiquinol. This chain is Na(+)-translocating NADH-quinone reductase subunit E, found in Methylococcus capsulatus (strain ATCC 33009 / NCIMB 11132 / Bath).